Here is a 466-residue protein sequence, read N- to C-terminus: Argininosuccinate lyase (466 aa).

The protein belongs to the lyase 1 family. Argininosuccinate lyase subfamily.

It is found in the cytoplasm. The enzyme catalyses 2-(N(omega)-L-arginino)succinate = fumarate + L-arginine. It participates in amino-acid biosynthesis; L-arginine biosynthesis; L-arginine from L-ornithine and carbamoyl phosphate: step 3/3. In Brucella abortus (strain S19), this protein is Argininosuccinate lyase.